We begin with the raw amino-acid sequence, 183 residues long: Large ribosomal subunit protein uL6 (183 aa).

Belongs to the universal ribosomal protein uL6 family. As to quaternary structure, part of the 50S ribosomal subunit.

This protein binds to the 23S rRNA, and is important in its secondary structure. It is located near the subunit interface in the base of the L7/L12 stalk, and near the tRNA binding site of the peptidyltransferase center. In Malacoplasma penetrans (strain HF-2) (Mycoplasma penetrans), this protein is Large ribosomal subunit protein uL6.